We begin with the raw amino-acid sequence, 335 residues long: Biotin synthase (335 aa).

Residues 46 to 274 (YKVQLASLFS…KSKIRLSAGR (229 aa)) enclose the Radical SAM core domain. Residues cysteine 61, cysteine 65, and cysteine 68 each contribute to the [4Fe-4S] cluster site. [2Fe-2S] cluster is bound by residues cysteine 105, cysteine 137, cysteine 197, and arginine 269.

This sequence belongs to the radical SAM superfamily. Biotin synthase family. In terms of assembly, homodimer. It depends on [4Fe-4S] cluster as a cofactor. [2Fe-2S] cluster is required as a cofactor.

It carries out the reaction (4R,5S)-dethiobiotin + (sulfur carrier)-SH + 2 reduced [2Fe-2S]-[ferredoxin] + 2 S-adenosyl-L-methionine = (sulfur carrier)-H + biotin + 2 5'-deoxyadenosine + 2 L-methionine + 2 oxidized [2Fe-2S]-[ferredoxin]. It functions in the pathway cofactor biosynthesis; biotin biosynthesis; biotin from 7,8-diaminononanoate: step 2/2. Its function is as follows. Catalyzes the conversion of dethiobiotin (DTB) to biotin by the insertion of a sulfur atom into dethiobiotin via a radical-based mechanism. The polypeptide is Biotin synthase (Prochlorococcus marinus subsp. pastoris (strain CCMP1986 / NIES-2087 / MED4)).